We begin with the raw amino-acid sequence, 147 residues long: Large ribosomal subunit protein uL11 (147 aa).

This sequence belongs to the universal ribosomal protein uL11 family. In terms of assembly, part of the ribosomal stalk of the 50S ribosomal subunit. Interacts with L10 and the large rRNA to form the base of the stalk. L10 forms an elongated spine to which L12 dimers bind in a sequential fashion forming a multimeric L10(L12)X complex. One or more lysine residues are methylated.

Forms part of the ribosomal stalk which helps the ribosome interact with GTP-bound translation factors. This chain is Large ribosomal subunit protein uL11, found in Cytophaga hutchinsonii (strain ATCC 33406 / DSM 1761 / CIP 103989 / NBRC 15051 / NCIMB 9469 / D465).